The sequence spans 123 residues: Large ribosomal subunit protein bL19 (123 aa).

The protein belongs to the bacterial ribosomal protein bL19 family.

In terms of biological role, this protein is located at the 30S-50S ribosomal subunit interface and may play a role in the structure and function of the aminoacyl-tRNA binding site. The sequence is that of Large ribosomal subunit protein bL19 from Ureaplasma parvum serovar 3 (strain ATCC 27815 / 27 / NCTC 11736).